The primary structure comprises 169 residues: Ubiquitin-conjugating enzyme E2 2 (169 aa).

The UBC core domain maps to Ala4–Val150. Cys88 serves as the catalytic Glycyl thioester intermediate.

Belongs to the ubiquitin-conjugating enzyme family.

It localises to the cytoplasm. The protein localises to the nucleus. It catalyses the reaction S-ubiquitinyl-[E1 ubiquitin-activating enzyme]-L-cysteine + [E2 ubiquitin-conjugating enzyme]-L-cysteine = [E1 ubiquitin-activating enzyme]-L-cysteine + S-ubiquitinyl-[E2 ubiquitin-conjugating enzyme]-L-cysteine.. The protein operates within protein modification; protein ubiquitination. Catalyzes the covalent attachment of ubiquitin to other proteins. Plays a role in transcription regulation by catalyzing the monoubiquitination of histone H2B to form H2BK123ub1. H2BK123ub1 gives a specific tag for epigenetic transcriptional activation and is also a prerequisite for H3K4me and H3K79me formation. Also involved in postreplication repair of UV-damaged DNA, in N-end rule-dependent protein degradation and in sporulation. This chain is Ubiquitin-conjugating enzyme E2 2 (UBC2), found in Cryptococcus neoformans var. neoformans serotype D (strain B-3501A) (Filobasidiella neoformans).